Here is a 172-residue protein sequence, read N- to C-terminus: Myosin regulatory light chain (172 aa).

Residue T17 is modified to Phosphothreonine. Phosphoserine is present on S18. EF-hand domains are found at residues 27-62 (AQIQEFKEAFNMIDQNRDGFIDQEDLKDMFASLGKE), 98-133 (DPEEVIRNAFQCFDEDNSGKLNEEHLRELLTTMGER), and 134-168 (YSEEQVDELFRDAPIKGGQFDYVEFTRMLKHGTKD). Positions 40, 42, 44, and 51 each coordinate Ca(2+).

In terms of assembly, myosin is a hexamer of 2 heavy chains and 4 light chains (two regulatory light chains and two essential light chains). May be phosphorylated by let-502 or/and pak-1 and dephosphorylated by mel-11 to regulate its activation and myosin II-mediated contraction. Expressed in the spermathecal and uterine walls. Weak expression in gonadal sheath and intestinal muscle. Not detected in vulval, pharyngeal or body wall muscles.

The protein resides in the cytoplasm. Its subcellular location is the cytoskeleton. Its function is as follows. Regulates myosin II activity and organization during embryo elongation. May be involved in the organization of mlc-5 into bundles. Required maternally for cytokinesis during meiosis and mitosis in the early embryo and for the establishment of embryonic anterior-posterior polarity. This chain is Myosin regulatory light chain, found in Caenorhabditis elegans.